The chain runs to 335 residues: Flagellar P-ring protein (335 aa).

The first 17 residues, 1–17 (MNKLMLMLITFATSLLA), serve as a signal peptide directing secretion.

It belongs to the FlgI family. The basal body constitutes a major portion of the flagellar organelle and consists of four rings (L,P,S, and M) mounted on a central rod.

It is found in the periplasm. Its subcellular location is the bacterial flagellum basal body. Its function is as follows. Assembles around the rod to form the L-ring and probably protects the motor/basal body from shearing forces during rotation. The polypeptide is Flagellar P-ring protein (flgI) (Borreliella burgdorferi (strain ATCC 35210 / DSM 4680 / CIP 102532 / B31) (Borrelia burgdorferi)).